The chain runs to 174 residues: Probasin (174 aa).

The signal sequence occupies residues 1-18 (MMRVIILLLTLHVLGVSS). Cysteines 77 and 168 form a disulfide.

It belongs to the calycin superfamily. Lipocalin family.

Its subcellular location is the secreted. The protein is Probasin (Pbsn) of Mus musculus (Mouse).